The following is a 497-amino-acid chain: Inactive metallocarboxypeptidase ecm14 (497 aa).

The first 28 residues, 1-28 (MAYNKSLKSLVFILLASQIVFVLFLCYG), serve as a signal peptide directing secretion. Residues 29–148 (KSSRELGVKW…TLFESIVPDT (120 aa)) constitute a propeptide that is removed on maturation. Residues 182–492 (SYQNLESINS…AMILYYGEFI (311 aa)) enclose the Peptidase M14 domain. Histidine 248 and glutamate 251 together coordinate Zn(2+). Substrate contacts are provided by residues 248–251 (HARE) and 323–324 (DA). Cysteines 317 and 337 form a disulfide. Histidine 377 contacts Zn(2+). Residue 378–379 (SY) coordinates substrate.

The protein belongs to the peptidase M14 family. The cofactor is Zn(2+).

It is found in the endoplasmic reticulum. It localises to the secreted. Inactive carboxypeptidase that may play a role in cell wall organization and biogenesis. This chain is Inactive metallocarboxypeptidase ecm14, found in Schizosaccharomyces pombe (strain 972 / ATCC 24843) (Fission yeast).